Reading from the N-terminus, the 282-residue chain is Pantothenate synthetase (282 aa).

An ATP-binding site is contributed by 30 to 37 (MGYLHEGH). The Proton donor role is filled by His-37. A (R)-pantoate-binding site is contributed by Gln-61. Gln-61 is a binding site for beta-alanine. 147–150 (GMKD) serves as a coordination point for ATP. Gln-153 contacts (R)-pantoate. Residues Val-176 and 184-187 (KSSR) each bind ATP.

The protein belongs to the pantothenate synthetase family. In terms of assembly, homodimer.

The protein localises to the cytoplasm. The catalysed reaction is (R)-pantoate + beta-alanine + ATP = (R)-pantothenate + AMP + diphosphate + H(+). It functions in the pathway cofactor biosynthesis; (R)-pantothenate biosynthesis; (R)-pantothenate from (R)-pantoate and beta-alanine: step 1/1. In terms of biological role, catalyzes the condensation of pantoate with beta-alanine in an ATP-dependent reaction via a pantoyl-adenylate intermediate. In Bacillus cytotoxicus (strain DSM 22905 / CIP 110041 / 391-98 / NVH 391-98), this protein is Pantothenate synthetase.